The primary structure comprises 226 residues: Orotate phosphoribosyltransferase 1 (226 aa).

Lys30 serves as a coordination point for 5-phospho-alpha-D-ribose 1-diphosphate. 38–39 serves as a coordination point for orotate; the sequence is FF. 5-phospho-alpha-D-ribose 1-diphosphate contacts are provided by residues 76–77, Arg106, Lys107, Lys110, His112, and 132–140; these read YK and DDVMTAGTA. The orotate site is built by Thr136 and Arg164. Ser213 and Ser225 each carry phosphoserine.

It belongs to the purine/pyrimidine phosphoribosyltransferase family. PyrE subfamily. Homodimer.

It catalyses the reaction orotidine 5'-phosphate + diphosphate = orotate + 5-phospho-alpha-D-ribose 1-diphosphate. It functions in the pathway pyrimidine metabolism; UMP biosynthesis via de novo pathway; UMP from orotate: step 1/2. Its function is as follows. Catalyzes the transfer of a ribosyl phosphate group from 5-phosphoribose 1-diphosphate to orotate, leading to the formation of orotidine monophosphate (OMP). In Saccharomyces cerevisiae (strain ATCC 204508 / S288c) (Baker's yeast), this protein is Orotate phosphoribosyltransferase 1 (URA5).